Consider the following 293-residue polypeptide: Nucleotide-binding protein Dole_0503 (293 aa).

11–18 lines the ATP pocket; that stretch reads GLSGSGKS. GTP is bound at residue 62–65; it reads DLRE.

This sequence belongs to the RapZ-like family.

Displays ATPase and GTPase activities. This is Nucleotide-binding protein Dole_0503 from Desulfosudis oleivorans (strain DSM 6200 / JCM 39069 / Hxd3) (Desulfococcus oleovorans).